A 320-amino-acid chain; its full sequence is Ferrochelatase (320 aa).

Fe cation-binding residues include H194 and E275.

This sequence belongs to the ferrochelatase family. In terms of assembly, monomer.

It localises to the cytoplasm. It catalyses the reaction heme b + 2 H(+) = protoporphyrin IX + Fe(2+). It functions in the pathway porphyrin-containing compound metabolism; protoheme biosynthesis; protoheme from protoporphyrin-IX: step 1/1. Catalyzes the ferrous insertion into protoporphyrin IX. The protein is Ferrochelatase of Salmonella schwarzengrund (strain CVM19633).